The following is a 512-amino-acid chain: AMP phosphorylase (512 aa).

Residues glycine 166, 192–197 (SRAITG), and threonine 201 contribute to the AMP site. The active-site Proton donor is aspartate 254. Residues serine 262 and lysine 286 each contribute to the AMP site.

Belongs to the thymidine/pyrimidine-nucleoside phosphorylase family. Type 2 subfamily.

The catalysed reaction is AMP + phosphate = alpha-D-ribose 1,5-bisphosphate + adenine. It catalyses the reaction CMP + phosphate = cytosine + alpha-D-ribose 1,5-bisphosphate. It carries out the reaction UMP + phosphate = alpha-D-ribose 1,5-bisphosphate + uracil. Functionally, catalyzes the conversion of AMP and phosphate to adenine and ribose 1,5-bisphosphate (R15P). Exhibits phosphorylase activity toward CMP and UMP in addition to AMP. Functions in an archaeal AMP degradation pathway, together with R15P isomerase and RubisCO. The polypeptide is AMP phosphorylase (Methanothrix thermoacetophila (strain DSM 6194 / JCM 14653 / NBRC 101360 / PT) (Methanosaeta thermophila)).